The chain runs to 243 residues: Protein GrpE (243 aa).

This sequence belongs to the GrpE family. As to quaternary structure, homodimer.

It is found in the cytoplasm. Its function is as follows. Participates actively in the response to hyperosmotic and heat shock by preventing the aggregation of stress-denatured proteins, in association with DnaK and GrpE. It is the nucleotide exchange factor for DnaK and may function as a thermosensor. Unfolded proteins bind initially to DnaJ; upon interaction with the DnaJ-bound protein, DnaK hydrolyzes its bound ATP, resulting in the formation of a stable complex. GrpE releases ADP from DnaK; ATP binding to DnaK triggers the release of the substrate protein, thus completing the reaction cycle. Several rounds of ATP-dependent interactions between DnaJ, DnaK and GrpE are required for fully efficient folding. The polypeptide is Protein GrpE (Mycoplasma mobile (strain ATCC 43663 / 163K / NCTC 11711) (Mesomycoplasma mobile)).